A 1377-amino-acid chain; its full sequence is Eukaryotic translation initiation factor 4 gamma (1377 aa).

2 stretches are compositionally biased toward low complexity: residues Met1–Tyr57 and Gln84–Gln94. 4 disordered regions span residues Met1–Thr189, Val259–Lys563, Asn683–Ala702, and Glu1041–Asn1063. The segment covering Pro95–Pro110 has biased composition (pro residues). Low complexity-rich tracts occupy residues Leu111–Asn137, Glu168–Asn179, and Ser267–Ser296. Residues Gly297–Ile323 show a composition bias toward polar residues. Residues Asp326–Thr412 are compositionally biased toward low complexity. 3 stretches are compositionally biased toward basic and acidic residues: residues Thr420–Pro432, Pro441–Pro471, and Asp480–Glu496. The span at Val517–Thr526 shows a compositional bias: polar residues. The span at Asp533–Thr549 shows a compositional bias: low complexity. The span at Glu1041–Lys1052 shows a compositional bias: basic and acidic residues. The segment covering Ser1053 to Asn1063 has biased composition (polar residues). Residues Ala1182–Ala1305 form the MI domain.

It belongs to the eukaryotic initiation factor 4G family.

Functionally, probable component of the protein complex eIF4F, which is involved in the recognition of the mRNA cap, ATP-dependent unwinding of 5'-terminal secondary structure and recruitment of mRNA to the ribosome. The protein is Eukaryotic translation initiation factor 4 gamma (eif4g) of Dictyostelium discoideum (Social amoeba).